Reading from the N-terminus, the 292-residue chain is 2-methylisocitrate lyase (292 aa).

Residue 44-46 coordinates substrate; the sequence is SGA. Asp84 and Asp86 together coordinate Mg(2+). Substrate contacts are provided by residues 121 to 122, Arg156, Glu186, 208 to 210, Arg239, and Arg268; these read CG and NMT.

This sequence belongs to the isocitrate lyase/PEP mutase superfamily. Methylisocitrate lyase family. In terms of assembly, homotetramer; dimer of dimers. It depends on Mg(2+) as a cofactor.

It carries out the reaction (2S,3R)-3-hydroxybutane-1,2,3-tricarboxylate = pyruvate + succinate. The protein operates within organic acid metabolism; propanoate degradation. In terms of biological role, involved in the catabolism of short chain fatty acids (SCFA) via the 2-methylcitrate cycle I (propionate degradation route). Catalyzes the thermodynamically favored C-C bond cleavage of (2R,3S)-2-methylisocitrate to yield pyruvate and succinate via an alpha-carboxy-carbanion intermediate. The chain is 2-methylisocitrate lyase from Shewanella oneidensis (strain ATCC 700550 / JCM 31522 / CIP 106686 / LMG 19005 / NCIMB 14063 / MR-1).